A 231-amino-acid chain; its full sequence is Sugar fermentation stimulation protein homolog (231 aa).

The protein belongs to the SfsA family.

The sequence is that of Sugar fermentation stimulation protein homolog from Syntrophotalea carbinolica (strain DSM 2380 / NBRC 103641 / GraBd1) (Pelobacter carbinolicus).